The sequence spans 77 residues: Dermatoxin-S1 (77 aa).

A signal peptide spans 1–22; the sequence is MAFLKKSLFLILFLGLVPLSFC. A propeptide spanning residues 23–44 is cleaved from the precursor; it reads ENDKREGENEEEQDDDQSEEKR. Glutamine 76 bears the Glutamine amide mark.

In terms of tissue distribution, expressed by the skin glands.

The protein localises to the secreted. It localises to the target cell membrane. Its function is as follows. Antimicrobial peptide with potent activity against Gram-positive bacteria B.megaterium, C.glutamicum and S.aureus and mollicutes A.laidlawii and S.melliferum. Less active against Gram-negative bacteria B.cepacia, P.aeruginosa, S.typhimurium and S.meliloti. Probably acts by disturbing membrane functions with its amphipathic structure. The protein is Dermatoxin-S1 of Phyllomedusa sauvagei (Sauvage's leaf frog).